Here is a 516-residue protein sequence, read N- to C-terminus: 7-chloro-L-tryptophan 6-halogenase KtzR (516 aa).

Residues G6, T8, A9, E42, and A43 each contribute to the FAD site. K71 is an active-site residue. V195 provides a ligand contact to FAD. Residues T357 and G358 each contribute to the chloride site. I359 contacts FAD.

This sequence belongs to the flavin-dependent halogenase family. Bacterial tryptophan halogenase subfamily.

It carries out the reaction 7-chloro-L-tryptophan + FADH2 + chloride + O2 = 6,7-dichloro-L-tryptophan + FAD + 2 H2O. Involved in the biosynthesis of kutznerides, actinomycete-derived antifungal and antimicrobial cyclic hexadepsipeptides. Together with KtzQ, catalyzes the regiospecific dichlorination of L-tryptophan (L-Trp) to produce 6,7-dichloro-L-tryptophan. KtzR catalyzes the chlorination of 7-chloro-L-tryptophan at C6 position to yield 6,7-dichloro-L-tryptophan. Can also use L-Trp as substrate and form 6-chloro-L-tryptophan, but has a 120-fold preference for 7-chloro-L-tryptophan over L-Trp. Cannot use piperazic acid or gamma,delta-dehydropiperazic acid. The sequence is that of 7-chloro-L-tryptophan 6-halogenase KtzR from Kutzneria sp. (strain 744).